Consider the following 488-residue polypeptide: Germacrene A hydroxylase (488 aa).

Residues 1-6 (MELSLT) lie on the Cytoplasmic side of the membrane. The helical; Signal-anchor for type II membrane protein transmembrane segment at 7–23 (TSIALATIVLILYKLAT) threads the bilayer. Residues 24 to 488 (RPKSNKKRLP…KTELILVPSF (465 aa)) lie on the Lumenal side of the membrane. N-linked (GlcNAc...) asparagine glycans are attached at residues N260 and N379. Heme is bound at residue C432.

It belongs to the cytochrome P450 family. It depends on heme as a cofactor.

The protein localises to the endoplasmic reticulum membrane. Its subcellular location is the microsome membrane. It carries out the reaction (+)-(R)-germacrene A + 3 reduced [NADPH--hemoprotein reductase] + 3 O2 = germacra-1(10),4,11(13)-trien-12-oate + 3 oxidized [NADPH--hemoprotein reductase] + 4 H2O + 4 H(+). Its pathway is secondary metabolite biosynthesis; terpenoid biosynthesis. With respect to regulation, inhibited by cytochrome C, miconazole, aminobenzotriazole, metyrapone and clotrimazole. Its function is as follows. Involved in the biosynthesis of germacrene-derived sesquiterpene lactones. Catalyzes three consecutive oxidations of germacrene A to produce germacrene A acid. Could also catalyze the three-step oxidation of non-natural substrate amorphadiene to artemisinic acid. Can use beta-elemene as substrate. The chain is Germacrene A hydroxylase from Cichorium intybus (Chicory).